The primary structure comprises 79 residues: Conotoxin Vi6.1 (79 aa).

Positions 1 to 22 (MKLTCVLIITVLFLTASQLITA) are cleaved as a signal peptide. The propeptide occupies 23–47 (DYSRDQRQYRAVRLGDEMRNFKGAR). Disulfide bonds link C49–C62, C56–C67, and C61–C77. 2 positions are modified to 4-hydroxyproline: P60 and P63.

Expressed by the venom duct.

The protein localises to the secreted. In terms of biological role, ion channel inhibitor that inhibits the increase in intracellular calcium upon depolarization in DRG neurons. In vivo, both intraperitoneal and intracranial injections into mice induce hyperactivity. The protein is Conotoxin Vi6.1 of Conus virgo (Virgin cone).